The primary structure comprises 247 residues: Cytochrome c oxidase subunit 2 (247 aa).

The first 11 residues, 1–11 (MFYLLNSIIMN), serve as a signal peptide directing secretion. Topologically, residues 12-38 (DVPTPYGMYFQDSATPNQEGILELHDN) are mitochondrial intermembrane. A helical membrane pass occupies residues 39–59 (IMFYLFIILGLVSWLLFTIVR). Residues 60–78 (TYSKNPIAYKYIKHGQTIE) lie on the Mitochondrial matrix side of the membrane. A helical membrane pass occupies residues 79 to 101 (IIWTIFPAVILLIIAFPSFILLY). Over 102-247 (LCDEVISPAM…PAFLEWLNEQ (146 aa)) the chain is Mitochondrial intermembrane. Residues His182, Cys217, Glu219, Cys221, His225, and Met228 each coordinate Cu cation. Residue Glu219 coordinates Mg(2+).

The protein belongs to the cytochrome c oxidase subunit 2 family. In terms of assembly, component of the cytochrome c oxidase (complex IV, CIV), a multisubunit enzyme composed of a catalytic core of 3 subunits and several supernumerary subunits. The complex exists as a monomer or a dimer and forms supercomplexes (SCs) in the inner mitochondrial membrane with ubiquinol-cytochrome c oxidoreductase (cytochrome b-c1 complex, complex III, CIII). Cu cation serves as cofactor. In terms of processing, the signal sequence of COX2 is processed by IMP1.

It localises to the mitochondrion inner membrane. It carries out the reaction 4 Fe(II)-[cytochrome c] + O2 + 8 H(+)(in) = 4 Fe(III)-[cytochrome c] + 2 H2O + 4 H(+)(out). In terms of biological role, component of the cytochrome c oxidase, the last enzyme in the mitochondrial electron transport chain which drives oxidative phosphorylation. The respiratory chain contains 3 multisubunit complexes succinate dehydrogenase (complex II, CII), ubiquinol-cytochrome c oxidoreductase (cytochrome b-c1 complex, complex III, CIII) and cytochrome c oxidase (complex IV, CIV), that cooperate to transfer electrons derived from NADH and succinate to molecular oxygen, creating an electrochemical gradient over the inner membrane that drives transmembrane transport and the ATP synthase. Cytochrome c oxidase is the component of the respiratory chain that catalyzes the reduction of oxygen to water. Electrons originating from reduced cytochrome c in the intermembrane space (IMS) are transferred via the dinuclear copper A center (CU(A)) of subunit 2 and heme A of subunit 1 to the active site in subunit 1, a binuclear center (BNC) formed by heme A3 and copper B (CU(B)). The BNC reduces molecular oxygen to 2 water molecules using 4 electrons from cytochrome c in the IMS and 4 protons from the mitochondrial matrix. The chain is Cytochrome c oxidase subunit 2 (COX2) from Kluyveromyces lactis (strain ATCC 8585 / CBS 2359 / DSM 70799 / NBRC 1267 / NRRL Y-1140 / WM37) (Yeast).